A 108-amino-acid chain; its full sequence is MSQQKQKQCAPPQQCCPPPQQRCPPPQQCCPPPQQCCPPPQQCCPPPQQCCPPPQQCCPPPQQCCPPPQQYCPPPQQTKQPCQPPPKCQEPCAPKCPPPQQCQTSKQK.

The span at 1-13 (MSQQKQKQCAPPQ) shows a compositional bias: low complexity. Disordered stretches follow at residues 1–24 (MSQQ…QRCP) and 73–108 (PPPQ…SKQK). Composition is skewed to pro residues over residues 14 to 24 (QCCPPPQQRCP) and 73 to 100 (PPPQ…PPPQ).

In terms of biological role, positively regulates keratinocyte differentiation by inducing genes associated with epidermal differentiation. The protein is Small proline-rich protein 5 of Homo sapiens (Human).